We begin with the raw amino-acid sequence, 542 residues long: Hydroxylamine reductase (542 aa).

C5, C8, C17, and C23 together coordinate [4Fe-4S] cluster. Residues H237, E261, C305, C397, C425, C450, E485, and K487 each coordinate hybrid [4Fe-2O-2S] cluster. Residue C397 is modified to Cysteine persulfide.

It belongs to the HCP family. Requires [4Fe-4S] cluster as cofactor. Hybrid [4Fe-2O-2S] cluster is required as a cofactor.

It localises to the cytoplasm. The enzyme catalyses A + NH4(+) + H2O = hydroxylamine + AH2 + H(+). Its function is as follows. Catalyzes the reduction of hydroxylamine to form NH(3) and H(2)O. In Acetivibrio thermocellus (strain ATCC 27405 / DSM 1237 / JCM 9322 / NBRC 103400 / NCIMB 10682 / NRRL B-4536 / VPI 7372) (Clostridium thermocellum), this protein is Hydroxylamine reductase.